Consider the following 391-residue polypeptide: Thioredoxin-interacting protein (391 aa).

Residue lysine 212 forms a Glycyl lysine isopeptide (Lys-Gly) (interchain with G-Cter in ubiquitin) linkage. At serine 361 the chain carries Phosphoserine.

The protein belongs to the arrestin family. As to quaternary structure, homodimer; disulfide-linked. Interacts with TXN/thioredoxin through its redox-active site. Interacts with transcriptional repressors ZBTB16, ZBTB32 and HDAC1. Interacts with DDIT4. Post-translationally, ubiquitinated; undergoes heterotypic 'Lys-48'-/'Lys-63'-branched polyubiquitination catalyzed by ITCH and UBR5 resulting in proteasomal degradation. Deubiquitinated by USP5, leading to TXNIP stabilization.

It localises to the cytoplasm. The protein resides in the nucleus. May act as an oxidative stress mediator by inhibiting thioredoxin activity or by limiting its bioavailability. Interacts with COPS5 and restores COPS5-induced suppression of CDKN1B stability, blocking the COPS5-mediated translocation of CDKN1B from the nucleus to the cytoplasm. Functions as a transcriptional repressor, possibly by acting as a bridge molecule between transcription factors and corepressor complexes, and over-expression will induce G0/G1 cell cycle arrest. Required for the maturation of natural killer cells. Acts as a suppressor of tumor cell growth. Inhibits the proteasomal degradation of DDIT4, and thereby contributes to the inhibition of the mammalian target of rapamycin complex 1 (mTORC1). This chain is Thioredoxin-interacting protein (TXNIP), found in Homo sapiens (Human).